Consider the following 476-residue polypeptide: 3-ketoacyl-CoA synthase 12 (476 aa).

A signal peptide spans 1 to 25 (MDLLFLFFSLLLSYLFFKIWKLIDS). Residues 26 to 313 (KQDKDCYILD…FMLKLLIKKI (288 aa)) form the FAE domain. Active-site residues include cysteine 168, histidine 247, histidine 344, histidine 348, histidine 377, and asparagine 381.

This sequence belongs to the thiolase-like superfamily. Chalcone/stilbene synthases family. Expressed in siliques, flowers and leaves.

Its subcellular location is the endoplasmic reticulum. It carries out the reaction a very-long-chain acyl-CoA + malonyl-CoA + H(+) = a very-long-chain 3-oxoacyl-CoA + CO2 + CoA. Its pathway is lipid metabolism; fatty acid biosynthesis. The protein is 3-ketoacyl-CoA synthase 12 of Arabidopsis thaliana (Mouse-ear cress).